A 381-amino-acid polypeptide reads, in one-letter code: tRNA pseudouridine synthase D (381 aa).

The active-site Nucleophile is Asp81. In terms of domain architecture, TRUD spans 160–335; it reads GMPNYFGPQR…TLGSRRFFWV (176 aa).

It belongs to the pseudouridine synthase TruD family.

The catalysed reaction is uridine(13) in tRNA = pseudouridine(13) in tRNA. Its function is as follows. Responsible for synthesis of pseudouridine from uracil-13 in transfer RNAs. This Helicobacter pylori (strain Shi470) protein is tRNA pseudouridine synthase D.